The following is a 272-amino-acid chain: GTP cyclohydrolase FolE2 (272 aa).

Belongs to the GTP cyclohydrolase IV family.

It carries out the reaction GTP + H2O = 7,8-dihydroneopterin 3'-triphosphate + formate + H(+). It functions in the pathway cofactor biosynthesis; 7,8-dihydroneopterin triphosphate biosynthesis; 7,8-dihydroneopterin triphosphate from GTP: step 1/1. Converts GTP to 7,8-dihydroneopterin triphosphate. The protein is GTP cyclohydrolase FolE2 of Aromatoleum aromaticum (strain DSM 19018 / LMG 30748 / EbN1) (Azoarcus sp. (strain EbN1)).